We begin with the raw amino-acid sequence, 504 residues long: Cytochrome P450 monooxygenase gsfF (504 aa).

An N-terminal signal peptide occupies residues 1–16 (MTVLFILSAGLVAVFG). Residues N97 and N150 are each glycosylated (N-linked (GlcNAc...) asparagine). Heme is bound at residue C450.

It belongs to the cytochrome P450 family. The cofactor is heme.

The catalysed reaction is griseophenone B + reduced [NADPH--hemoprotein reductase] + O2 + H(+) = desmethyl-dehydrogriseofulvin + oxidized [NADPH--hemoprotein reductase] + 2 H2O. It functions in the pathway secondary metabolite biosynthesis; terpenoid biosynthesis. In terms of biological role, cytochrome P450 monooxygenase; part of the gene cluster that mediates the biosynthesis of griseofulvin, an important antifungal drug that has been in use for a long time for treating dermatophyte infections. The first step of the pathway is the formation of the heptaketide backbone by gsfA which is initiated by priming with acetyl-CoA, followed by sequential condensations of 6 malonyl-CoA units. The resulting benzophenone can undergo a spontaneous dehydration to form norlichexanthone. However, the true precursor for the griseofulvin biosynthesis is not norlichexanthone, but the heptaketide benzophenone that is O-methylated at 3-OH by gsfB to produce griseophenone D which is further methylated at 9-OH by gsfC to yield griseophenone C. Griseophenone C is then substrate of halogenase gsfI which is responsible for the regio-specific chlorination at the C13 position to form griseophenone B. The cytochrome P450 gsfF catalyzes the coupling of orcinol and phloroglucinol rings in griseophenone B to form desmethyl-dehydrogriseofulvin A which is further methylated at 5-OH by gsfD to yield dehydrogriseofulvin. Finally, gsfE performs stereospecific reduction of enone 18 of dehydrogriseofulvin to afford the final product griseofulvin. This chain is Cytochrome P450 monooxygenase gsfF, found in Penicillium aethiopicum.